Consider the following 554-residue polypeptide: Afadin- and alpha-actinin-binding protein A (554 aa).

Coiled coils occupy residues Leu122 to Lys287 and Glu359 to Leu449. The tract at residues Leu508–Ser528 is disordered.

It belongs to the ADIP family. Interacts with WRAP73.

The protein resides in the cell junction. It localises to the adherens junction. Its subcellular location is the cytoplasm. It is found in the cytoskeleton. The protein localises to the microtubule organizing center. The protein resides in the centrosome. It localises to the centriolar satellite. Functionally, belongs to an adhesion system, which plays a role in the organization of homotypic, interneuronal and heterotypic cell-cell adherens junctions (AJs). Involved in cell movement. Acts as a centrosome maturation factor, probably by maintaining the integrity of the pericentriolar material and proper microtubule nucleation at mitotic spindle poles. The function seems to implicate at least in part WRAP73; the SSX2IP:WRAP73 complex is proposed to act as regulator of spindle anchoring at the mitotic centrosome. The polypeptide is Afadin- and alpha-actinin-binding protein A (ssx2ip-a) (Xenopus laevis (African clawed frog)).